An 84-amino-acid polypeptide reads, in one-letter code: MKSILWLCVFGLLIATLFPVSWQMAIKSRLSSEDSETDQRLFESKRHSDAIFTEEYSKLLAKLALQKYLASILGSRTSPPPPSR.

Positions Met1–Gln23 are cleaved as a signal peptide. Positions Met24–Ser44 are excised as a propeptide.

The protein belongs to the glucagon family. In terms of processing, an amidated Pro-81 is described. Such an amidation is however not compatible with the sequence displayed. Indeed cDNAs do not encode a Gly that could serve as substrate for peptide alpha-amidation. As to expression, expressed by the venom gland. Not expressed in the pancreas, liver, stomach, small intestine, lung, heart, kidney, spleen, ovary, and brain.

It localises to the secreted. Its function is as follows. Has vasoactive intestinal peptide(VIP)/secretin-like biological activity. Interacts with rat and human VIP receptors 1 (VIPR1) and 2 (VIPR2), with the highest affinity for the human VIPR2. Induces hypotension that is mediated by relaxation of cardiac smooth muscle. This vasodilation may not be transduced by VIP or PACAP receptors. The polypeptide is Exendin-2-long (Heloderma suspectum (Gila monster)).